We begin with the raw amino-acid sequence, 537 residues long: Eukaryotic translation initiation factor 3 subunit L (537 aa).

Positions 1–19 are enriched in basic and acidic residues; sequence MSRRVEFDLSTEDHSDRRR. Residues 1-30 form a disordered region; sequence MSRRVEFDLSTEDHSDRRRTNTFSSSADED. The PCI domain occupies 299-487; the sequence is EATKMFVNCL…GPSSADDDEP (189 aa).

Belongs to the eIF-3 subunit L family. In terms of assembly, component of the eukaryotic translation initiation factor 3 (eIF-3) complex.

Its subcellular location is the cytoplasm. Component of the eukaryotic translation initiation factor 3 (eIF-3) complex, which is involved in protein synthesis of a specialized repertoire of mRNAs and, together with other initiation factors, stimulates binding of mRNA and methionyl-tRNAi to the 40S ribosome. The eIF-3 complex specifically targets and initiates translation of a subset of mRNAs involved in cell proliferation. The sequence is that of Eukaryotic translation initiation factor 3 subunit L from Caenorhabditis elegans.